We begin with the raw amino-acid sequence, 189 residues long: Isopentenyl-diphosphate Delta-isomerase (189 aa).

Residues His27 and His34 each contribute to the Mn(2+) site. Residues 32-171 (PLHFAFSTYI…PFVFSPWMVD (140 aa)) enclose the Nudix hydrolase domain. Cys69 is a catalytic residue. A Mn(2+)-binding site is contributed by His71. Mg(2+) is bound at residue Glu89. Positions 119 and 121 each coordinate Mn(2+). Glu121 is a catalytic residue.

Belongs to the IPP isomerase type 1 family. Mg(2+) is required as a cofactor. Mn(2+) serves as cofactor.

It is found in the cytoplasm. The catalysed reaction is isopentenyl diphosphate = dimethylallyl diphosphate. It participates in isoprenoid biosynthesis; dimethylallyl diphosphate biosynthesis; dimethylallyl diphosphate from isopentenyl diphosphate: step 1/1. In terms of biological role, catalyzes the 1,3-allylic rearrangement of the homoallylic substrate isopentenyl (IPP) to its highly electrophilic allylic isomer, dimethylallyl diphosphate (DMAPP). In Corynebacterium glutamicum (strain R), this protein is Isopentenyl-diphosphate Delta-isomerase.